A 245-amino-acid polypeptide reads, in one-letter code: Probable phosphatase KPK_3500 (245 aa).

Zn(2+)-binding residues include histidine 7, histidine 9, histidine 15, histidine 40, glutamate 73, histidine 101, histidine 131, aspartate 192, and histidine 194.

The protein belongs to the PHP family. In terms of assembly, homotrimer. Zn(2+) serves as cofactor.

The polypeptide is Probable phosphatase KPK_3500 (Klebsiella pneumoniae (strain 342)).